The following is a 210-amino-acid chain: ER membrane protein complex subunit 8 (210 aa).

In terms of domain architecture, MPN spans 4–150; the sequence is VKLTTQAYCK…IHVYEHHENR (147 aa).

It belongs to the EMC8/EMC9 family. Component of the ER membrane protein complex (EMC). EMC8 and EMC9 are mutually exclusive subunits of the EMC complex. Expressed in liver, pancreas, heart, lung, kidney, brain, skeletal muscle, and placenta. Expression levels are highest in pancreas and moderate in heart, skeletal muscle, and placenta.

Its subcellular location is the endoplasmic reticulum membrane. Its function is as follows. Part of the endoplasmic reticulum membrane protein complex (EMC) that enables the energy-independent insertion into endoplasmic reticulum membranes of newly synthesized membrane proteins. Preferentially accommodates proteins with transmembrane domains that are weakly hydrophobic or contain destabilizing features such as charged and aromatic residues. Involved in the cotranslational insertion of multi-pass membrane proteins in which stop-transfer membrane-anchor sequences become ER membrane spanning helices. It is also required for the post-translational insertion of tail-anchored/TA proteins in endoplasmic reticulum membranes. By mediating the proper cotranslational insertion of N-terminal transmembrane domains in an N-exo topology, with translocated N-terminus in the lumen of the ER, controls the topology of multi-pass membrane proteins like the G protein-coupled receptors. By regulating the insertion of various proteins in membranes, it is indirectly involved in many cellular processes. This chain is ER membrane protein complex subunit 8 (EMC8), found in Homo sapiens (Human).